The sequence spans 324 residues: Reaction center protein M chain (324 aa).

Residues 2 to 51 (ADYQTIYTQIQARGPHITVSGEWGDNDRVGKPFYSYWLGKIGDAQIGPIY) are Cytoplasmic-facing. A helical membrane pass occupies residues 52–76 (LGASGIAAFAFGSTAILIILFNMAA). Over 77-110 (EVHFDPLQFFRQFFWLGLYPPKAQYGMGIPPLHD) the chain is Periplasmic. A helical membrane pass occupies residues 111–137 (GGWWLMAGLFMTLSLGSWWIRVYSRAR). Over 138–142 (ALGLG) the chain is Cytoplasmic. The helical transmembrane segment at 143 to 166 (THIAWNFAAAIFFVLCIGCIHPTL) threads the bilayer. Topologically, residues 167 to 197 (VGSWSEGVPFGIWPHIDWLTAFSIRYGNFYY) are periplasmic. Residues histidine 181 and histidine 201 each coordinate (7R,8Z)-bacteriochlorophyll b. The helical transmembrane segment at 198-223 (CPWHGFSIGFAYGCGLLFAAHGATIL) threads the bilayer. Fe cation contacts are provided by histidine 218 and glutamate 233. Residues 224–259 (AVARFGGDREIEQITDRGTAVERAALFWRWTIGFNA) lie on the Cytoplasmic side of the membrane. A ubiquinone is bound at residue tryptophan 251. Residues 260 to 284 (TIESVHRWGWFFSLMVMVSASVGIL) form a helical membrane-spanning segment. A Fe cation-binding site is contributed by histidine 265. At 285-324 (LTGTFVDNWYLWCVKHGAAPDYPAYLPATPDPASLPGAPK) the chain is on the periplasmic side.

This sequence belongs to the reaction center PufL/M/PsbA/D family. Reaction center is composed of four bacteriochlorophylls, two bacteriopheophytins, two ubiquinones, one iron, and three highly hydrophobic polypeptide chains (designated L, M, and H).

It localises to the cellular chromatophore membrane. The reaction center is a membrane-bound complex that mediates the initial photochemical event in the electron transfer process of photosynthesis. The chain is Reaction center protein M chain (pufM) from Blastochloris viridis (Rhodopseudomonas viridis).